The following is a 115-amino-acid chain: Pro-neuregulin-4, membrane-bound isoform (115 aa).

Over 1–62 the chain is Extracellular; it reads MPTDHEEPCG…SSIQTKSNLF (62 aa). One can recognise an EGF-like domain in the interval 5 to 46; the sequence is HEEPCGPSHKSFCLNGGLCYVIPTIPSPFCRCVENYTGARCE. Disulfide bonds link Cys9-Cys23, Cys17-Cys34, and Cys36-Cys45. An N-linked (GlcNAc...) asparagine glycan is attached at Asn39. The helical transmembrane segment at 63-83 threads the bilayer; the sequence is EAFVALAVLVTLIIGAFYFLC. Over 84–115 the chain is Cytoplasmic; it reads RKGHFQRASSVQYDINLVETSSTSAHHSHEQH.

This sequence belongs to the neuregulin family. As to quaternary structure, interacts with ERBB4. In terms of processing, proteolytic cleavage close to the plasma membrane on the external face leads to the release of the soluble growth factor form. Post-translationally, extensive glycosylation precedes the proteolytic cleavage.

The protein localises to the cell membrane. Its subcellular location is the secreted. Its function is as follows. Low affinity ligand for the ERBB4 tyrosine kinase receptor. Concomitantly recruits ERBB1 and ERBB2 coreceptors, resulting in ligand-stimulated tyrosine phosphorylation and activation of the ERBB receptors. Does not bind to the ERBB1, ERBB2 and ERBB3 receptors. The protein is Pro-neuregulin-4, membrane-bound isoform (NRG4) of Homo sapiens (Human).